The primary structure comprises 294 residues: Segregation and condensation protein A (294 aa).

Belongs to the ScpA family. In terms of assembly, component of a cohesin-like complex composed of ScpA, ScpB and the Smc homodimer, in which ScpA and ScpB bind to the head domain of Smc. The presence of the three proteins is required for the association of the complex with DNA.

It is found in the cytoplasm. Its function is as follows. Participates in chromosomal partition during cell division. May act via the formation of a condensin-like complex containing Smc and ScpB that pull DNA away from mid-cell into both cell halves. The polypeptide is Segregation and condensation protein A (Ureaplasma parvum serovar 3 (strain ATCC 700970)).